A 574-amino-acid chain; its full sequence is Lengsin (574 aa).

2 disordered regions span residues 1 to 36 (MNDE…KVTK) and 66 to 131 (GNMS…IPTT). Over residues 11–23 (NTRDEGNETEASR) the composition is skewed to basic and acidic residues. Basic residues predominate over residues 25–36 (SKLRRTRKKVTK). Residues 91 to 131 (NQTTVIKPSPLKTSASAPCSEFNTNSNHADNTWEDTQIPTT) are compositionally biased toward polar residues. Residues 148–242 (NHLQFVRFEA…VICDTFTVTG (95 aa)) form the GS beta-grasp domain. Positions 249–574 (PRYIAKRQLS…ERNKFLEYFI (326 aa)) constitute a GS catalytic domain.

The protein belongs to the glutamine synthetase family. Dodecamer. Interacts with BFSP2 and VIM.

In terms of biological role, may act as a component of the cytoskeleton or as a chaperone for the reorganization of intermediate filament proteins during terminal differentiation in the lens. Does not seem to have enzymatic activity. The chain is Lengsin (LGSN) from Canis lupus familiaris (Dog).